A 198-amino-acid chain; its full sequence is UPF0548 protein DR_2035 (198 aa).

It belongs to the UPF0548 family.

This chain is UPF0548 protein DR_2035, found in Deinococcus radiodurans (strain ATCC 13939 / DSM 20539 / JCM 16871 / CCUG 27074 / LMG 4051 / NBRC 15346 / NCIMB 9279 / VKM B-1422 / R1).